Here is a 254-residue protein sequence, read N- to C-terminus: Imidazole glycerol phosphate synthase subunit HisF (254 aa).

Catalysis depends on residues Asp14 and Asp133.

Belongs to the HisA/HisF family. In terms of assembly, heterodimer of HisH and HisF.

The protein localises to the cytoplasm. The catalysed reaction is 5-[(5-phospho-1-deoxy-D-ribulos-1-ylimino)methylamino]-1-(5-phospho-beta-D-ribosyl)imidazole-4-carboxamide + L-glutamine = D-erythro-1-(imidazol-4-yl)glycerol 3-phosphate + 5-amino-1-(5-phospho-beta-D-ribosyl)imidazole-4-carboxamide + L-glutamate + H(+). Its pathway is amino-acid biosynthesis; L-histidine biosynthesis; L-histidine from 5-phospho-alpha-D-ribose 1-diphosphate: step 5/9. In terms of biological role, IGPS catalyzes the conversion of PRFAR and glutamine to IGP, AICAR and glutamate. The HisF subunit catalyzes the cyclization activity that produces IGP and AICAR from PRFAR using the ammonia provided by the HisH subunit. The polypeptide is Imidazole glycerol phosphate synthase subunit HisF (Nitratiruptor sp. (strain SB155-2)).